A 333-amino-acid polypeptide reads, in one-letter code: Holliday junction branch migration complex subunit RuvB (333 aa).

The large ATPase domain (RuvB-L) stretch occupies residues 1-173; sequence MTAPENLDAA…FGIIEHLEYY (173 aa). Residues Leu11, Arg12, Gly53, Lys56, Thr57, Thr58, 120–122, Arg163, Tyr173, and Arg210 each bind ATP; that span reads EDF. A Mg(2+)-binding site is contributed by Thr57. The small ATPAse domain (RuvB-S) stretch occupies residues 174-244; that stretch reads TAEEIATNLL…RAQSALDKLG (71 aa). The segment at 247–333 is head domain (RuvB-H); the sequence is SAGLDDRDKK…IDDGNGIFLN (87 aa). DNA-binding residues include Arg302 and Arg307.

This sequence belongs to the RuvB family. Homohexamer. Forms an RuvA(8)-RuvB(12)-Holliday junction (HJ) complex. HJ DNA is sandwiched between 2 RuvA tetramers; dsDNA enters through RuvA and exits via RuvB. An RuvB hexamer assembles on each DNA strand where it exits the tetramer. Each RuvB hexamer is contacted by two RuvA subunits (via domain III) on 2 adjacent RuvB subunits; this complex drives branch migration. In the full resolvosome a probable DNA-RuvA(4)-RuvB(12)-RuvC(2) complex forms which resolves the HJ.

It localises to the cytoplasm. It catalyses the reaction ATP + H2O = ADP + phosphate + H(+). The RuvA-RuvB-RuvC complex processes Holliday junction (HJ) DNA during genetic recombination and DNA repair, while the RuvA-RuvB complex plays an important role in the rescue of blocked DNA replication forks via replication fork reversal (RFR). RuvA specifically binds to HJ cruciform DNA, conferring on it an open structure. The RuvB hexamer acts as an ATP-dependent pump, pulling dsDNA into and through the RuvAB complex. RuvB forms 2 homohexamers on either side of HJ DNA bound by 1 or 2 RuvA tetramers; 4 subunits per hexamer contact DNA at a time. Coordinated motions by a converter formed by DNA-disengaged RuvB subunits stimulates ATP hydrolysis and nucleotide exchange. Immobilization of the converter enables RuvB to convert the ATP-contained energy into a lever motion, pulling 2 nucleotides of DNA out of the RuvA tetramer per ATP hydrolyzed, thus driving DNA branch migration. The RuvB motors rotate together with the DNA substrate, which together with the progressing nucleotide cycle form the mechanistic basis for DNA recombination by continuous HJ branch migration. Branch migration allows RuvC to scan DNA until it finds its consensus sequence, where it cleaves and resolves cruciform DNA. This is Holliday junction branch migration complex subunit RuvB from Deinococcus radiodurans (strain ATCC 13939 / DSM 20539 / JCM 16871 / CCUG 27074 / LMG 4051 / NBRC 15346 / NCIMB 9279 / VKM B-1422 / R1).